The following is a 306-amino-acid chain: Lipid A biosynthesis lauroyltransferase (306 aa).

Residues 17–37 (WLTWLGIGVLWLVVQLPYPVI) traverse the membrane as a helical segment. Positions 132–137 (HFLTLE) match the HXXXXD motif motif.

The protein belongs to the LpxL/LpxM/LpxP family. Monomer.

Its subcellular location is the cell inner membrane. The enzyme catalyses dodecanoyl-[ACP] + alpha-Kdo-(2-&gt;4)-alpha-Kdo-(2-&gt;6)-lipid IVA (E. coli) = alpha-Kdo-(2-&gt;4)-alpha-Kdo-(2-&gt;6)-(dodecanoyl)-lipid IVA (E. coli) + holo-[ACP]. It functions in the pathway glycolipid biosynthesis; KDO(2)-lipid A biosynthesis; KDO(2)-lipid A from CMP-3-deoxy-D-manno-octulosonate and lipid IV(A): step 3/4. Its pathway is bacterial outer membrane biogenesis; lipopolysaccharide biosynthesis. In terms of biological role, catalyzes the transfer of laurate from lauroyl-[acyl-carrier-protein] (ACP) to Kdo(2)-lipid IV(A) to form Kdo(2)-(lauroyl)-lipid IV(A). Has 10 fold selectivity for lauroyl-ACP over myristoyl-ACP. In vitro, can also catalyze a slow second acylation reaction leading to the formation of Kdo(2)-(dilauroyl)-lipid IV(A). This chain is Lipid A biosynthesis lauroyltransferase, found in Escherichia coli (strain K12).